Here is a 473-residue protein sequence, read N- to C-terminus: Lactate utilization protein B (473 aa).

4Fe-4S ferredoxin-type domains follow at residues 302–332 (GSEF…GHSY) and 351–380 (YDDY…LHDL). The [4Fe-4S] cluster site is built by cysteine 311, cysteine 314, cysteine 317, cysteine 321, cysteine 364, cysteine 367, and cysteine 371.

Belongs to the LutB/YkgF family.

In terms of biological role, is involved in L-lactate degradation and allows cells to grow with lactate as the sole carbon source. Has probably a role as an electron transporter during oxidation of L-lactate. The protein is Lactate utilization protein B of Bacillus cereus (strain G9842).